Reading from the N-terminus, the 375-residue chain is Succinyl-diaminopimelate desuccinylase (375 aa).

His66 lines the Zn(2+) pocket. Asp68 is an active-site residue. Asp99 contacts Zn(2+). Glu133 serves as the catalytic Proton acceptor. Residues Glu134, Glu162, and His348 each contribute to the Zn(2+) site.

This sequence belongs to the peptidase M20A family. DapE subfamily. Homodimer. Zn(2+) is required as a cofactor. Requires Co(2+) as cofactor.

The enzyme catalyses N-succinyl-(2S,6S)-2,6-diaminopimelate + H2O = (2S,6S)-2,6-diaminopimelate + succinate. It participates in amino-acid biosynthesis; L-lysine biosynthesis via DAP pathway; LL-2,6-diaminopimelate from (S)-tetrahydrodipicolinate (succinylase route): step 3/3. Catalyzes the hydrolysis of N-succinyl-L,L-diaminopimelic acid (SDAP), forming succinate and LL-2,6-diaminopimelate (DAP), an intermediate involved in the bacterial biosynthesis of lysine and meso-diaminopimelic acid, an essential component of bacterial cell walls. In Serratia proteamaculans (strain 568), this protein is Succinyl-diaminopimelate desuccinylase.